The following is a 189-amino-acid chain: Translation initiation factor IF-3 (189 aa).

Belongs to the IF-3 family. As to quaternary structure, monomer.

Its subcellular location is the cytoplasm. In terms of biological role, IF-3 binds to the 30S ribosomal subunit and shifts the equilibrium between 70S ribosomes and their 50S and 30S subunits in favor of the free subunits, thus enhancing the availability of 30S subunits on which protein synthesis initiation begins. This is Translation initiation factor IF-3 from Corynebacterium glutamicum (strain R).